Consider the following 508-residue polypeptide: Bifunctional purine biosynthesis protein PurH (508 aa).

The MGS-like domain maps to 1–145 (MTKRALISVS…KNHQYVTVIV (145 aa)).

This sequence belongs to the PurH family.

The catalysed reaction is (6R)-10-formyltetrahydrofolate + 5-amino-1-(5-phospho-beta-D-ribosyl)imidazole-4-carboxamide = 5-formamido-1-(5-phospho-D-ribosyl)imidazole-4-carboxamide + (6S)-5,6,7,8-tetrahydrofolate. It carries out the reaction IMP + H2O = 5-formamido-1-(5-phospho-D-ribosyl)imidazole-4-carboxamide. Its pathway is purine metabolism; IMP biosynthesis via de novo pathway; 5-formamido-1-(5-phospho-D-ribosyl)imidazole-4-carboxamide from 5-amino-1-(5-phospho-D-ribosyl)imidazole-4-carboxamide (10-formyl THF route): step 1/1. It functions in the pathway purine metabolism; IMP biosynthesis via de novo pathway; IMP from 5-formamido-1-(5-phospho-D-ribosyl)imidazole-4-carboxamide: step 1/1. This is Bifunctional purine biosynthesis protein PurH from Lysinibacillus sphaericus (strain C3-41).